Here is a 334-residue protein sequence, read N- to C-terminus: HTH-type transcriptional repressor PurR (334 aa).

One can recognise an HTH lacI-type domain in the interval 2 to 56; sequence ATIKDVARMAGVSTTTVSHVINKTRFVAEATQKKVLAAVDDLNYAPSAVARSLKC. Residues 4–23 constitute a DNA-binding region (H-T-H motif); that stretch reads IKDVARMAGVSTTTVSHVIN. Residues 48 to 56 mediate DNA binding; sequence SAVARSLKC. Residues phenylalanine 73, lysine 189, threonine 191, phenylalanine 220, and aspartate 274 each contribute to the hypoxanthine site.

In terms of assembly, homodimer.

Its pathway is purine metabolism; purine nucleotide biosynthesis [regulation]. In terms of biological role, is the main repressor of the genes involved in the de novo synthesis of purine nucleotides, regulating purB, purC, purEK, purF, purHD, purL, purMN and guaBA expression. PurR is allosterically activated to bind its cognate DNA by binding the purine corepressors, hypoxanthine or guanine, thereby effecting transcription repression. This is HTH-type transcriptional repressor PurR from Photobacterium profundum (strain SS9).